The following is a 643-amino-acid chain: E3 ubiquitin-protein ligase AMFR (643 aa).

6 helical membrane-spanning segments follow: residues 82–102, 122–142, 186–206, 215–235, 254–274, and 276–296; these read LFVW…AKLI, FWNF…VQTV, VLSL…VCCV, TLAF…HVIL, GTYV…LDLM, and HIHM…VIFM. The segment at 341–379 adopts an RING-type zinc-finger fold; that stretch reads CAICWDSMQAARKLPCGHLFHNSCLRSWLEQDTSCPTCR. Residues 429-449 traverse the membrane as a helical segment; sequence IASWLPSFSVEVMHTTNILGI. One can recognise a CUE domain in the interval 456–498; that stretch reads QLNAMAHQIQEMFPQVPYHLVLQDLQMTRSVEITTDNILEGRI. The interval 504–535 is disordered; it reads TQRSDSLRPALNSPVERPSPDLEEGEASVQTE. A phosphoserine mark is found at Ser516 and Ser542. A disordered region spans residues 598-624; the sequence is LNKSSEDDGASERLLPSEGTSSDPVTL. A VCP/p97-interacting motif (VIM) region spans residues 622–640; that stretch reads VTLRRRMLAAAAERRLQRQ.

Interacts with RNF5. Also forms an ERAD complex containing VCP/p97, NGLY1; PSMC1; SAKS1 and RAD23B required for coupling retrotranslocation, ubiquitination and deglycosylation. Interacts with DERL1. Interacts (through a region distinct from the RING finger) with UBE2G2/UBC7. Component of the VCP/p97-AMFR/gp78 complex that enhances VCP/p97 binding to polyubiquitinated proteins for their degradation by the endoplasmic reticulum-associated degradation (ERAD) pathway. Interacts (via the VIM) with VCP/p97. Interacts (via its membrane domain) with INSIG1; the interaction initiates the sterol-mediated ubiquitination and degradation of HMGCR by the ERAD pathway. Interacts with AUP1, UBE2G2 and RNF139/TRC8; interaction with AUP1 facilitates interaction of AMFR with ubiquitin-conjugating enzyme UBE2G2 and ubiquitin ligase RNF139, leading to sterol-induced ubiquitination of HNGCR and its subsequent proteasomal degradation. Interacts with BAG6. Interacts with USP13 (via UBA 2 domain); the interaction is direct. Interacts with LMBR1L, UBAC2 and CTNNB1. Interacts with C18orf32. Palmitoylation of the RING-type zing finger by ZDHHC6 promotes localization to the peripheral endoplasmic reticulum. Expressed in heart, brain, liver, lung, skeletal muscle, kidney and testis. Not detected in spleen.

The protein resides in the endoplasmic reticulum membrane. It carries out the reaction [E2 ubiquitin-conjugating enzyme]-S-ubiquitinyl-L-cysteine + [acceptor protein]-L-cysteine = [E2 ubiquitin-conjugating enzyme]-L-cysteine + [acceptor protein]-S-ubiquitinyl-L-cysteine.. Its pathway is protein modification; protein ubiquitination. Functionally, E3 ubiquitin-protein ligase that mediates the polyubiquitination of lysine and cysteine residues on target proteins, such as CD3D, CYP3A4, CFTR, INSIG1, SOAT2/ACAT2 and APOB for proteasomal degradation. Component of a VCP/p97-AMFR/gp78 complex that participates in the final step of endoplasmic reticulum-associated degradation (ERAD). The VCP/p97-AMFR/gp78 complex is involved in the sterol-accelerated ERAD degradation of HMGCR through binding to the HMGCR-INSIG1 complex at the ER membrane. In addition, interaction of AMFR with AUP1 facilitates interaction of AMFR with ubiquitin-conjugating enzyme UBE2G2 and ubiquitin ligase RNF139, leading to sterol-induced HMGCR ubiquitination. The ubiquitinated HMGCR is then released from the ER by the complex into the cytosol for subsequent destruction. In addition to ubiquitination on lysine residues, catalyzes ubiquitination on cysteine residues: together with INSIG1, mediates polyubiquitination of SOAT2/ACAT2 at 'Cys-277', leading to its degradation when the lipid levels are low. Catalyzes ubiquitination and subsequent degradation of INSIG1 when cells are depleted of sterols. Mediates polyubiquitination of INSIG2 at 'Cys-215' in some tissues, leading to its degradation. Also regulates ERAD through the ubiquitination of UBL4A a component of the BAG6/BAT3 complex. Also acts as a scaffold protein to assemble a complex that couples ubiquitination, retranslocation and deglycosylation. Mediates tumor invasion and metastasis as a receptor for the GPI/autocrine motility factor. In association with LMBR1L and UBAC2, negatively regulates the canonical Wnt signaling pathway in the lymphocytes by promoting the ubiquitin-mediated degradation of CTNNB1 and Wnt receptors FZD6 and LRP6. Regulates NF-kappa-B and MAPK signaling pathways by mediating 'Lys-27'-linked polyubiquitination of TAB3 and promoting subsequent TAK1/MAP3K7 activation. The sequence is that of E3 ubiquitin-protein ligase AMFR (Amfr) from Mus musculus (Mouse).